The following is an 88-amino-acid chain: Small ribosomal subunit protein bS20 (88 aa).

The protein belongs to the bacterial ribosomal protein bS20 family.

Binds directly to 16S ribosomal RNA. This is Small ribosomal subunit protein bS20 from Brucella abortus (strain S19).